The primary structure comprises 145 residues: Aegerolysin Aa-Pri1 (145 aa).

A propeptide spanning residues 1 to 8 is cleaved from the precursor; that stretch reads MDSNKDER.

Belongs to the aegerolysin family.

In Cyclocybe aegerita (Black poplar mushroom), this protein is Aegerolysin Aa-Pri1 (AA-PRI1).